The sequence spans 37 residues: Cytochrome b6-f complex subunit 5 (37 aa).

A helical membrane pass occupies residues 5 to 25; the sequence is LLSGVVLGLILVTLSGLFFAA.

The protein belongs to the PetG family. In terms of assembly, the 4 large subunits of the cytochrome b6-f complex are cytochrome b6, subunit IV (17 kDa polypeptide, PetD), cytochrome f and the Rieske protein, while the 4 small subunits are PetG, PetL, PetM and PetN. The complex functions as a dimer.

Its subcellular location is the cellular thylakoid membrane. In terms of biological role, component of the cytochrome b6-f complex, which mediates electron transfer between photosystem II (PSII) and photosystem I (PSI), cyclic electron flow around PSI, and state transitions. PetG is required for either the stability or assembly of the cytochrome b6-f complex. The chain is Cytochrome b6-f complex subunit 5 from Trichodesmium erythraeum (strain IMS101).